We begin with the raw amino-acid sequence, 80 residues long: Small ribosomal subunit protein uS17 (80 aa).

This sequence belongs to the universal ribosomal protein uS17 family. Part of the 30S ribosomal subunit.

Functionally, one of the primary rRNA binding proteins, it binds specifically to the 5'-end of 16S ribosomal RNA. The polypeptide is Small ribosomal subunit protein uS17 (Cereibacter sphaeroides (strain ATCC 17029 / ATH 2.4.9) (Rhodobacter sphaeroides)).